A 423-amino-acid chain; its full sequence is MPRRIPWIIKYRPKKIADVVNQDSAKKQFIQWLESWLKGKPSKKAALLYGPAGCGKTSLVEAAANEYGLEIVEMNASDFRRRQDIERIAKTAAFMRSLFARGKIILLDEVDGISGTADRGAIDAILHLLEITRYPVVMTANNPWDQKLKPLRDASLMIAFKRLSERDVIIVLKRICQLEKLECEDAALREIARRSEGDLRSAINDLQAIAEGFGRVTLNWVRELSAYRTREYAPFEALQKMFNARYIFQAKSAISQANIDYETMMIWINEHIPTYYDDPEEIWRAYEALSRADVYMGRIRKSGSWDLLSYVFDMMGPGVAFARKIYRYKWKAFRSPKRLQLLAQTKRSREVREGIAMTLAPRLLTSRATIKRDVIPFLKIIFTHAPKYAAKIALGYGLTEEMIKWLAGPKSSEVLAYYRRLKR.

50–57 serves as a coordination point for ATP; it reads GPAGCGKT.

It belongs to the activator 1 small subunits family. RfcL subfamily. Heteromultimer composed of small subunits (RfcS) and large subunits (RfcL).

Part of the RFC clamp loader complex which loads the PCNA sliding clamp onto DNA. The chain is Replication factor C large subunit from Staphylothermus marinus (strain ATCC 43588 / DSM 3639 / JCM 9404 / F1).